A 198-amino-acid polypeptide reads, in one-letter code: Nucleoside triphosphate pyrophosphatase (198 aa).

The active-site Proton acceptor is the Asp74.

Belongs to the Maf family. It depends on a divalent metal cation as a cofactor.

It localises to the cytoplasm. The catalysed reaction is a ribonucleoside 5'-triphosphate + H2O = a ribonucleoside 5'-phosphate + diphosphate + H(+). It catalyses the reaction a 2'-deoxyribonucleoside 5'-triphosphate + H2O = a 2'-deoxyribonucleoside 5'-phosphate + diphosphate + H(+). In terms of biological role, nucleoside triphosphate pyrophosphatase. May have a dual role in cell division arrest and in preventing the incorporation of modified nucleotides into cellular nucleic acids. This Sphingopyxis alaskensis (strain DSM 13593 / LMG 18877 / RB2256) (Sphingomonas alaskensis) protein is Nucleoside triphosphate pyrophosphatase.